We begin with the raw amino-acid sequence, 358 residues long: DnaJ homolog subfamily B member 11 (358 aa).

A signal peptide spans 1 to 22 (MAPQNLGTFCLLLLYLIGTVIA). The J domain occupies 25-90 (DFYKILGVPR…EKRKQYDTYG (66 aa)). Thr188 carries the post-translational modification Phosphothreonine. N-linked (GlcNAc...) asparagine glycosylation is present at Asn261.

In terms of assembly, part of a large chaperone multiprotein complex comprising DNAJB11, HSP90B1, HSPA5, HYOU, PDIA2, PDIA4, PDIA6, PPIB, SDF2L1, UGGT1 and very small amounts of ERP29, but not, or at very low levels, CALR nor CANX. Binds to denatured substrates in an ATP-independent manner. Interacts via the J domain with HSPA5 in an ATP-dependent manner. Post-translationally, contains high-mannose Endo H-sensitive carbohydrates. Cys-169, Cys-171, Cys-193 and Cys-196 form intramolecular disulfide bonds. The preferential partner for each Cys is not known.

Its subcellular location is the endoplasmic reticulum lumen. Functionally, as a co-chaperone for HSPA5 it is required for proper folding, trafficking or degradation of proteins. Binds directly to both unfolded proteins that are substrates for ERAD and nascent unfolded peptide chains, but dissociates from the HSPA5-unfolded protein complex before folding is completed. May help recruiting HSPA5 and other chaperones to the substrate. Stimulates HSPA5 ATPase activity. It is necessary for maturation and correct trafficking of PKD1. This chain is DnaJ homolog subfamily B member 11 (DNAJB11), found in Bos taurus (Bovine).